The primary structure comprises 547 residues: Flagellar hook-associated protein 1 (547 aa).

It belongs to the flagella basal body rod proteins family.

Its subcellular location is the secreted. The protein localises to the bacterial flagellum. This Escherichia coli (strain K12) protein is Flagellar hook-associated protein 1 (flgK).